The following is a 470-amino-acid chain: tRNA-2-methylthio-N(6)-dimethylallyladenosine synthase (470 aa).

In terms of domain architecture, MTTase N-terminal spans 20–138; it reads PRVHIETFGC…LPELVERARS (119 aa). [4Fe-4S] cluster-binding residues include Cys29, Cys65, Cys99, Cys176, Cys180, and Cys183. Residues 162–398 form the Radical SAM core domain; it reads REGDLKAWVT…MEVQNRIARA (237 aa). In terms of domain architecture, TRAM spans 401–464; that stretch reads EARVGKVYDI…TWTLEGELVE (64 aa).

Belongs to the methylthiotransferase family. MiaB subfamily. Monomer. Requires [4Fe-4S] cluster as cofactor.

It is found in the cytoplasm. It carries out the reaction N(6)-dimethylallyladenosine(37) in tRNA + (sulfur carrier)-SH + AH2 + 2 S-adenosyl-L-methionine = 2-methylsulfanyl-N(6)-dimethylallyladenosine(37) in tRNA + (sulfur carrier)-H + 5'-deoxyadenosine + L-methionine + A + S-adenosyl-L-homocysteine + 2 H(+). Its function is as follows. Catalyzes the methylthiolation of N6-(dimethylallyl)adenosine (i(6)A), leading to the formation of 2-methylthio-N6-(dimethylallyl)adenosine (ms(2)i(6)A) at position 37 in tRNAs that read codons beginning with uridine. This is tRNA-2-methylthio-N(6)-dimethylallyladenosine synthase from Symbiobacterium thermophilum (strain DSM 24528 / JCM 14929 / IAM 14863 / T).